Reading from the N-terminus, the 66-residue chain is Protein translocase subunit SecE (66 aa).

A helical transmembrane segment spans residues 29–49 (LVASTLVVVVAVFIFSLTCLV).

The protein belongs to the SecE/SEC61-gamma family. Component of the Sec protein translocase complex. Heterotrimer consisting of SecY, SecE and SecG subunits. The heterotrimers can form oligomers, although 1 heterotrimer is thought to be able to translocate proteins. Interacts with the ribosome. Interacts with SecDF, and other proteins may be involved. Interacts with SecA.

It localises to the cell inner membrane. Its function is as follows. Essential subunit of the Sec protein translocation channel SecYEG. Clamps together the 2 halves of SecY. May contact the channel plug during translocation. This Rickettsia rickettsii protein is Protein translocase subunit SecE.